The sequence spans 338 residues: Lumican (338 aa).

The signal sequence occupies residues 1-18 (MNVCAFSLALALVGSVSG). Gln-19 carries the post-translational modification Pyrrolidone carboxylic acid. Sulfotyrosine occurs at positions 20, 21, 23, and 30. The LRRNT domain occupies 28 to 66 (FMYGQISPNCAPECNCPHSYPTAMYCDDLKLKSVPMVPP). 8 LRR repeats span residues 67-88 (GIKY…AFEN), 91-114 (DLQW…VFSK), 117-137 (QLKK…PLPK), 138-159 (SLQD…DGLV), 160-181 (NLTF…ASLK), 185-205 (SLEY…GLPT), 206-227 (SLLT…YFKR), and 230-250 (GLQY…PGNS). Asn-88 carries N-linked (GlcNAc...) (keratan sulfate) asparagine glycosylation. Asn-127 carries N-linked (GlcNAc...) (keratan sulfate) asparagine glycosylation. Asn-160 carries N-linked (GlcNAc...) (keratan sulfate) asparagine glycosylation. N-linked (GlcNAc...) (keratan sulfate) asparagine glycosylation occurs at Asn-252. LRR repeat units follow at residues 255 to 276 (SLLE…NENL) and 277 to 296 (ENYY…SFCK). Cysteines 295 and 328 form a disulfide. A Phosphoserine modification is found at Ser-304. The LRR 11 repeat unit spans residues 305 to 326 (KIKHLRLDGNPLTQSSLPPDMY).

It belongs to the small leucine-rich proteoglycan (SLRP) family. SLRP class II subfamily. In terms of assembly, binds to laminin. Post-translationally, contains keratan sulfate. Cys-37, Cys-41, Cys-43 and Cys-53 are involved in disulfide bonds. In terms of tissue distribution, cornea and other tissues.

Its subcellular location is the secreted. It is found in the extracellular space. It localises to the extracellular matrix. The sequence is that of Lumican (Lum) from Mus musculus (Mouse).